A 424-amino-acid chain; its full sequence is Glutamyl-tRNA reductase (424 aa).

Substrate contacts are provided by residues 49–52, serine 108, 113–115, and glutamine 119; these read TCNR and EPQ. Cysteine 50 serves as the catalytic Nucleophile. 188–193 contacts NADP(+); the sequence is GAGETI.

The protein belongs to the glutamyl-tRNA reductase family. As to quaternary structure, homodimer.

The catalysed reaction is (S)-4-amino-5-oxopentanoate + tRNA(Glu) + NADP(+) = L-glutamyl-tRNA(Glu) + NADPH + H(+). It participates in porphyrin-containing compound metabolism; protoporphyrin-IX biosynthesis; 5-aminolevulinate from L-glutamyl-tRNA(Glu): step 1/2. Functionally, catalyzes the NADPH-dependent reduction of glutamyl-tRNA(Glu) to glutamate 1-semialdehyde (GSA). This Hahella chejuensis (strain KCTC 2396) protein is Glutamyl-tRNA reductase.